A 936-amino-acid polypeptide reads, in one-letter code: UPF0746 protein DDB_G0280787 (936 aa).

Residues 1–19 (MISNKRKEIDTIDGHHEKD) show a composition bias toward basic and acidic residues. The segment at 1 to 30 (MISNKRKEIDTIDGHHEKDNDDDDSDGIDN) is disordered. The region spanning 44–78 (SGSTNYRELQIIAKSLGLASNGKKQLVYNRIEGYF) is the SAP domain. The tract at residues 91–110 (ETNQQEEKKEEEQQQPQPQE) is disordered.

The protein belongs to the UPF0746 family.

The chain is UPF0746 protein DDB_G0280787 from Dictyostelium discoideum (Social amoeba).